The following is a 2298-amino-acid chain: Protein Ycf2 (2298 aa).

1652–1659 contacts ATP; the sequence is GSIGTGRS.

Belongs to the Ycf2 family.

The protein resides in the plastid. It localises to the chloroplast stroma. Functionally, probable ATPase of unknown function. Its presence in a non-photosynthetic plant (Epifagus virginiana) and experiments in tobacco indicate that it has an essential function which is probably not related to photosynthesis. This Aethionema cordifolium (Lebanon stonecress) protein is Protein Ycf2.